The chain runs to 591 residues: 2-succinyl-5-enolpyruvyl-6-hydroxy-3-cyclohexene-1-carboxylate synthase (591 aa).

It belongs to the TPP enzyme family. MenD subfamily. As to quaternary structure, homodimer. It depends on Mg(2+) as a cofactor. Mn(2+) is required as a cofactor. Requires thiamine diphosphate as cofactor.

It carries out the reaction isochorismate + 2-oxoglutarate + H(+) = 5-enolpyruvoyl-6-hydroxy-2-succinyl-cyclohex-3-ene-1-carboxylate + CO2. It functions in the pathway quinol/quinone metabolism; 1,4-dihydroxy-2-naphthoate biosynthesis; 1,4-dihydroxy-2-naphthoate from chorismate: step 2/7. Its pathway is quinol/quinone metabolism; menaquinone biosynthesis. Catalyzes the thiamine diphosphate-dependent decarboxylation of 2-oxoglutarate and the subsequent addition of the resulting succinic semialdehyde-thiamine pyrophosphate anion to isochorismate to yield 2-succinyl-5-enolpyruvyl-6-hydroxy-3-cyclohexene-1-carboxylate (SEPHCHC). This is 2-succinyl-5-enolpyruvyl-6-hydroxy-3-cyclohexene-1-carboxylate synthase from Salinibacter ruber (strain DSM 13855 / M31).